We begin with the raw amino-acid sequence, 321 residues long: Peroxidase 5 (321 aa).

A signal peptide spans 1 to 24 (MERFSLRFVLMMVSIILTSSICQA). Gln25 bears the Pyrrolidone carboxylic acid mark. 4 cysteine pairs are disulfide-bonded: Cys35/Cys115, Cys68/Cys73, Cys121/Cys317, and Cys201/Cys227. The Proton acceptor role is filled by His66. Asp67, Val70, Gly72, Asp74, and Ser76 together coordinate Ca(2+). Pro164 contacts substrate. His194 contacts heme b. Thr195 contacts Ca(2+). Asn211 carries an N-linked (GlcNAc...) asparagine glycan. Asp240, Thr243, and Asp248 together coordinate Ca(2+). A glycan (N-linked (GlcNAc...) asparagine) is linked at Asn285.

The protein belongs to the peroxidase family. Classical plant (class III) peroxidase subfamily. Heme b serves as cofactor. It depends on Ca(2+) as a cofactor.

It is found in the secreted. The catalysed reaction is 2 a phenolic donor + H2O2 = 2 a phenolic radical donor + 2 H2O. In terms of biological role, removal of H(2)O(2), oxidation of toxic reductants, biosynthesis and degradation of lignin, suberization, auxin catabolism, response to environmental stresses such as wounding, pathogen attack and oxidative stress. These functions might be dependent on each isozyme/isoform in each plant tissue. The polypeptide is Peroxidase 5 (PER5) (Arabidopsis thaliana (Mouse-ear cress)).